A 166-amino-acid polypeptide reads, in one-letter code: Phosphopantetheine adenylyltransferase (166 aa).

Ser-9 serves as a coordination point for substrate. ATP is bound by residues 9 to 10 and His-17; that span reads SY. Positions 41, 75, and 89 each coordinate substrate. Residues 90–92, Glu-100, and 124–130 each bind ATP; these read GLR and LEHISSS.

Belongs to the bacterial CoaD family. In terms of assembly, homohexamer. Requires Mg(2+) as cofactor.

It localises to the cytoplasm. The enzyme catalyses (R)-4'-phosphopantetheine + ATP + H(+) = 3'-dephospho-CoA + diphosphate. Its pathway is cofactor biosynthesis; coenzyme A biosynthesis; CoA from (R)-pantothenate: step 4/5. Functionally, reversibly transfers an adenylyl group from ATP to 4'-phosphopantetheine, yielding dephospho-CoA (dPCoA) and pyrophosphate. This chain is Phosphopantetheine adenylyltransferase, found in Bifidobacterium longum (strain DJO10A).